We begin with the raw amino-acid sequence, 386 residues long: MVVFSKVAAAAFGLSAVASAMPAAPPRQGFTINQLTRAIPKRTINLPAIYANALSKYGGNVPPHIQDAMAHGSAVTTPEQYDVEYLTPVAVGGTTMNLDFDTGSADLWVFSNELPSSQTTGHSVYKPSDNGTRMSGYSWEISYGDGSSAGGDVYRDTVTVGGVTAPGQAVEAASHISEQFTRDQNNDGLLGLAFSSINTVQPKSQTTFFDSVKSQLESPLFAVTLKHQAPGSYDFGYIDQSKYTGELTYTDVDNSQGFWMFSATAGETDFDAIADTGTTLIMIDQSIAEDYYSQVPLAFNNFFYGGWTFPCSAELPSFTVTINGYDAVVPGEHIKYAPVTDGSSTCFGGIQDNQGLPFSILGDVFLKSQYVVFDSEGPQLGFAPQA.

Positions 1 to 20 (MVVFSKVAAAAFGLSAVASA) are cleaved as a signal peptide. Positions 21 to 69 (MPAAPPRQGFTINQLTRAIPKRTINLPAIYANALSKYGGNVPPHIQDAM) are cleaved as a propeptide — activation peptide. The 299-residue stretch at 85 to 383 (YLTPVAVGGT…DSEGPQLGFA (299 aa)) folds into the Peptidase A1 domain. Residue Asp101 is part of the active site. Residue Asn130 is glycosylated (N-linked (GlcNAc...) asparagine). Residue Asp275 is part of the active site. Cys311 and Cys346 are oxidised to a cystine.

It belongs to the peptidase A1 family. Monomer.

It localises to the secreted. The catalysed reaction is Hydrolysis of proteins with broad specificity. Generally favors hydrophobic residues in P1 and P1', but also accepts Lys in P1, which leads to activation of trypsinogen. Does not clot milk.. Its function is as follows. Secreted aspartic endopeptidase that allows assimilation of proteinaceous substrates. The scissile peptide bond is attacked by a nucleophilic water molecule activated by two aspartic residues in the active site. Shows a broad primary substrate specificity. Favors hydrophobic residues at the P1 and P1' positions, but also accepts a lysine residue in the P1 position, leading to the activation of trypsinogen and chymotrypsinogen A. The polypeptide is Aspergillopepsin-1 (Emericella nidulans (strain FGSC A4 / ATCC 38163 / CBS 112.46 / NRRL 194 / M139) (Aspergillus nidulans)).